The chain runs to 126 residues: Histone H2B type F-S (126 aa).

The span at 1–12 (MPEPAKSAPAPK) shows a compositional bias: low complexity. The interval 1-36 (MPEPAKSAPAPKKGSKKAVTKAQKKDGRKRKRSRKE) is disordered. Proline 2 is subject to N-acetylproline. The residue at position 3 (glutamate 3) is an ADP-ribosyl glutamic acid. At lysine 6 the chain carries N6-(2-hydroxyisobutyryl)lysine; alternate. N6-(beta-hydroxybutyryl)lysine; alternate is present on lysine 6. Lysine 6 is subject to N6-acetyllysine; alternate. N6-butyryllysine; alternate is present on lysine 6. The residue at position 6 (lysine 6) is an N6-crotonyllysine; alternate. Lysine 6 is modified (N6-lactoyllysine; alternate). Lysine 6 participates in a covalent cross-link: Glycyl lysine isopeptide (Lys-Gly) (interchain with G-Cter in SUMO2); alternate. Serine 7 is subject to ADP-ribosylserine. Lysine 12 is subject to N6-(beta-hydroxybutyryl)lysine; alternate. Lysine 12 and lysine 13 each carry N6-acetyllysine; alternate. An N6-crotonyllysine; alternate mark is found at lysine 12 and lysine 13. The residue at position 12 (lysine 12) is an N6-lactoyllysine; alternate. Lysine 13 is subject to N6-(2-hydroxyisobutyryl)lysine; alternate. Phosphoserine; by STK4/MST1 is present on serine 15. Residues lysine 16, lysine 17, lysine 21, and lysine 24 each carry the N6-acetyllysine; alternate modification. Lysine 16, lysine 17, lysine 21, and lysine 24 each carry N6-crotonyllysine; alternate. N6-lactoyllysine; alternate occurs at positions 16, 17, 21, and 24. N6-(beta-hydroxybutyryl)lysine; alternate is present on residues lysine 17 and lysine 21. Lysine 17 bears the N6-glutaryllysine; alternate mark. Residues lysine 21 and lysine 24 each carry the N6-(2-hydroxyisobutyryl)lysine; alternate modification. Lysine 21 carries the N6-butyryllysine; alternate modification. Lysine 21 participates in a covalent cross-link: Glycyl lysine isopeptide (Lys-Gly) (interchain with G-Cter in SUMO2); alternate. Lysine 25 is modified (N6-(2-hydroxyisobutyryl)lysine). Position 35 is an N6-(2-hydroxyisobutyryl)lysine; alternate (lysine 35). Lysine 35 bears the N6-(beta-hydroxybutyryl)lysine; alternate mark. An N6-crotonyllysine; alternate modification is found at lysine 35. Lysine 35 is modified (N6-glutaryllysine; alternate). At lysine 35 the chain carries N6-succinyllysine; alternate. Residue lysine 35 forms a Glycyl lysine isopeptide (Lys-Gly) (interchain with G-Cter in ubiquitin); alternate linkage. Position 36 is a polyADP-ribosyl glutamic acid (glutamate 36). Serine 37 carries the phosphoserine; by AMPK modification. 3 positions are modified to N6-(2-hydroxyisobutyryl)lysine; alternate: lysine 44, lysine 47, and lysine 58. Residue lysine 44 is modified to N6-lactoyllysine; alternate. N6-glutaryllysine; alternate occurs at positions 44 and 47. An N6-methyllysine; alternate modification is found at lysine 47. N6,N6-dimethyllysine; alternate is present on lysine 58. The residue at position 80 (arginine 80) is a Dimethylated arginine. Lysine 86 is subject to N6-(2-hydroxyisobutyryl)lysine; alternate. Lysine 86 is subject to N6-(beta-hydroxybutyryl)lysine; alternate. The residue at position 86 (lysine 86) is an N6-acetyllysine; alternate. Lysine 86 is modified (N6-lactoyllysine; alternate). The residue at position 86 (lysine 86) is an N6,N6,N6-trimethyllysine; alternate. Residues arginine 87 and arginine 93 each carry the omega-N-methylarginine modification. The residue at position 109 (lysine 109) is an N6-(2-hydroxyisobutyryl)lysine; alternate. Lysine 109 carries the post-translational modification N6-lactoyllysine; alternate. Lysine 109 bears the N6-glutaryllysine; alternate mark. Lysine 109 carries the N6-methyllysine; alternate modification. Serine 113 carries O-linked (GlcNAc) serine glycosylation. At threonine 116 the chain carries Phosphothreonine. Lysine 117 and lysine 121 each carry N6-(2-hydroxyisobutyryl)lysine; alternate. N6-(beta-hydroxybutyryl)lysine; alternate occurs at positions 117 and 121. N6-lactoyllysine; alternate is present on residues lysine 117 and lysine 121. N6-glutaryllysine; alternate is present on residues lysine 117 and lysine 121. Residues lysine 117 and lysine 121 each carry the N6-succinyllysine; alternate modification. Lysine 117 is modified (N6-malonyllysine; alternate). N6-methylated lysine; alternate is present on lysine 117. Lysine 121 is covalently cross-linked (Glycyl lysine isopeptide (Lys-Gly) (interchain with G-Cter in ubiquitin); alternate).

Belongs to the histone H2B family. As to quaternary structure, the nucleosome is a histone octamer containing two molecules each of H2A, H2B, H3 and H4 assembled in one H3-H4 heterotetramer and two H2A-H2B heterodimers. The octamer wraps approximately 147 bp of DNA. Post-translationally, monoubiquitination at Lys-35 (H2BK34Ub) by the MSL1/MSL2 dimer is required for histone H3 'Lys-4' (H3K4me) and 'Lys-79' (H3K79me) methylation and transcription activation at specific gene loci, such as HOXA9 and MEIS1 loci. Similarly, monoubiquitination at Lys-121 (H2BK120Ub) by the RNF20/40 complex gives a specific tag for epigenetic transcriptional activation and is also prerequisite for histone H3 'Lys-4' and 'Lys-79' methylation. It also functions cooperatively with the FACT dimer to stimulate elongation by RNA polymerase II. H2BK120Ub also acts as a regulator of mRNA splicing: deubiquitination by USP49 is required for efficient cotranscriptional splicing of a large set of exons. In terms of processing, phosphorylation at Ser-37 (H2BS36ph) by AMPK in response to stress promotes transcription. Phosphorylated on Ser-15 (H2BS14ph) by STK4/MST1 during apoptosis; which facilitates apoptotic chromatin condensation. Also phosphorylated on Ser-15 in response to DNA double strand breaks (DSBs), and in correlation with somatic hypermutation and immunoglobulin class-switch recombination. GlcNAcylation at Ser-113 promotes monoubiquitination of Lys-121. It fluctuates in response to extracellular glucose, and associates with transcribed genes. Post-translationally, ADP-ribosylated by PARP1 or PARP2 on Ser-7 (H2BS6ADPr) in response to DNA damage. H2BS6ADPr promotes recruitment of CHD1L. Mono-ADP-ribosylated on Glu-3 (H2BE2ADPr) by PARP3 in response to single-strand breaks. Poly ADP-ribosylation on Glu-36 (H2BE35ADPr) by PARP1 regulates adipogenesis: it inhibits phosphorylation at Ser-37 (H2BS36ph), thereby blocking expression of pro-adipogenetic genes. In terms of processing, crotonylation (Kcr) is specifically present in male germ cells and marks testis-specific genes in post-meiotic cells, including X-linked genes that escape sex chromosome inactivation in haploid cells. Crotonylation marks active promoters and enhancers and confers resistance to transcriptional repressors. It is also associated with post-meiotically activated genes on autosomes. Lactylated in macrophages by EP300/P300 by using lactoyl-CoA directly derived from endogenous or exogenous lactate, leading to stimulates gene transcription.

It localises to the nucleus. It is found in the chromosome. Functionally, core component of nucleosome. Nucleosomes wrap and compact DNA into chromatin, limiting DNA accessibility to the cellular machineries which require DNA as a template. Histones thereby play a central role in transcription regulation, DNA repair, DNA replication and chromosomal stability. DNA accessibility is regulated via a complex set of post-translational modifications of histones, also called histone code, and nucleosome remodeling. Its function is as follows. Has broad antibacterial activity. May contribute to the formation of the functional antimicrobial barrier of the colonic epithelium, and to the bactericidal activity of amniotic fluid. The sequence is that of Histone H2B type F-S from Homo sapiens (Human).